We begin with the raw amino-acid sequence, 74 residues long: ATP synthase subunit c (74 aa).

2 helical membrane passes run 8–28 (FIGI…VSNI) and 52–72 (IGAG…MLLI).

This sequence belongs to the ATPase C chain family. F-type ATPases have 2 components, F(1) - the catalytic core - and F(0) - the membrane proton channel. F(1) has five subunits: alpha(3), beta(3), gamma(1), delta(1), epsilon(1). F(0) has three main subunits: a(1), b(2) and c(10-14). The alpha and beta chains form an alternating ring which encloses part of the gamma chain. F(1) is attached to F(0) by a central stalk formed by the gamma and epsilon chains, while a peripheral stalk is formed by the delta and b chains.

Its subcellular location is the cell inner membrane. In terms of biological role, f(1)F(0) ATP synthase produces ATP from ADP in the presence of a proton or sodium gradient. F-type ATPases consist of two structural domains, F(1) containing the extramembraneous catalytic core and F(0) containing the membrane proton channel, linked together by a central stalk and a peripheral stalk. During catalysis, ATP synthesis in the catalytic domain of F(1) is coupled via a rotary mechanism of the central stalk subunits to proton translocation. Functionally, key component of the F(0) channel; it plays a direct role in translocation across the membrane. A homomeric c-ring of between 10-14 subunits forms the central stalk rotor element with the F(1) delta and epsilon subunits. This Rickettsia typhi (strain ATCC VR-144 / Wilmington) protein is ATP synthase subunit c.